The primary structure comprises 208 residues: Large ribosomal subunit protein uL3 (208 aa).

A disordered region spans residues 116–148 (GFQGVIKRHGQSRGPMAHGSRYHRRPGSMGPVA).

Belongs to the universal ribosomal protein uL3 family. In terms of assembly, part of the 50S ribosomal subunit. Forms a cluster with proteins L14 and L19.

Its function is as follows. One of the primary rRNA binding proteins, it binds directly near the 3'-end of the 23S rRNA, where it nucleates assembly of the 50S subunit. In Streptococcus pyogenes serotype M6 (strain ATCC BAA-946 / MGAS10394), this protein is Large ribosomal subunit protein uL3.